A 456-amino-acid chain; its full sequence is Bifunctional protein GlmU (456 aa).

The segment at 1–229 (MLNNAMSVVI…LSEVEGVNNR (229 aa)) is pyrophosphorylase. UDP-N-acetyl-alpha-D-glucosamine contacts are provided by residues 11–14 (LAAG), lysine 25, glutamine 76, 81–82 (GT), 103–105 (YGD), glycine 140, glutamate 154, asparagine 169, and asparagine 227. Aspartate 105 provides a ligand contact to Mg(2+). Asparagine 227 provides a ligand contact to Mg(2+). The tract at residues 230-250 (LQLSRLERVYQSEQAEKLLLA) is linker. An N-acetyltransferase region spans residues 251–456 (GVMLRDPARF…EGWRRPVKKK (206 aa)). UDP-N-acetyl-alpha-D-glucosamine contacts are provided by arginine 333 and lysine 351. Histidine 363 functions as the Proton acceptor in the catalytic mechanism. Residues tyrosine 366 and asparagine 377 each contribute to the UDP-N-acetyl-alpha-D-glucosamine site. Residues alanine 380, 386–387 (NY), serine 405, alanine 423, and arginine 440 contribute to the acetyl-CoA site.

In the N-terminal section; belongs to the N-acetylglucosamine-1-phosphate uridyltransferase family. It in the C-terminal section; belongs to the transferase hexapeptide repeat family. In terms of assembly, homotrimer. Mg(2+) is required as a cofactor.

It is found in the cytoplasm. It carries out the reaction alpha-D-glucosamine 1-phosphate + acetyl-CoA = N-acetyl-alpha-D-glucosamine 1-phosphate + CoA + H(+). The catalysed reaction is N-acetyl-alpha-D-glucosamine 1-phosphate + UTP + H(+) = UDP-N-acetyl-alpha-D-glucosamine + diphosphate. Its pathway is nucleotide-sugar biosynthesis; UDP-N-acetyl-alpha-D-glucosamine biosynthesis; N-acetyl-alpha-D-glucosamine 1-phosphate from alpha-D-glucosamine 6-phosphate (route II): step 2/2. The protein operates within nucleotide-sugar biosynthesis; UDP-N-acetyl-alpha-D-glucosamine biosynthesis; UDP-N-acetyl-alpha-D-glucosamine from N-acetyl-alpha-D-glucosamine 1-phosphate: step 1/1. It participates in bacterial outer membrane biogenesis; LPS lipid A biosynthesis. In terms of biological role, catalyzes the last two sequential reactions in the de novo biosynthetic pathway for UDP-N-acetylglucosamine (UDP-GlcNAc). The C-terminal domain catalyzes the transfer of acetyl group from acetyl coenzyme A to glucosamine-1-phosphate (GlcN-1-P) to produce N-acetylglucosamine-1-phosphate (GlcNAc-1-P), which is converted into UDP-GlcNAc by the transfer of uridine 5-monophosphate (from uridine 5-triphosphate), a reaction catalyzed by the N-terminal domain. This chain is Bifunctional protein GlmU, found in Escherichia fergusonii (strain ATCC 35469 / DSM 13698 / CCUG 18766 / IAM 14443 / JCM 21226 / LMG 7866 / NBRC 102419 / NCTC 12128 / CDC 0568-73).